The primary structure comprises 538 residues: Interleukin-21 receptor (538 aa).

Positions 1 to 19 are cleaved as a signal peptide; it reads MPRGWAAPLLLLLLQGGWG. 3 cysteine pairs are disulfide-bonded: C20/C109, C25/C35, and C65/C81. Residues 20–232 are Extracellular-facing; it reads CPDLVCYTDY…FQTQSEELKE (213 aa). Fibronectin type-III domains follow at residues 21-118 and 119-228; these read PDLV…AESI and KPAP…TQSE. N-linked (GlcNAc...) asparagine glycans are attached at residues N73, N97, N104, N125, and N135. The C-linked (Man) tryptophan glycan is linked to W214. The WSXWS motif signature appears at 214–218; it reads WSEWS. Residues 233 to 253 form a helical membrane-spanning segment; that stretch reads GWNPHLLLLLLLVIVFIPAFW. Residues 254–538 are Cytoplasmic-facing; the sequence is SLKTHPLWRL…PLSSPGPQAS (285 aa). The short motif at 266-274 is the Box 1 motif element; that stretch reads KIWAVPSPE. Disordered stretches follow at residues 342–367 and 457–487; these read ESDG…SEER and EDWA…GLDM.

The protein belongs to the type I cytokine receptor family. Type 4 subfamily. As to quaternary structure, heterodimer with the common gamma subunit. Associates with JAK1. C-mannosylated at Trp-214 in the WSXWS motif, the sugar chain makes extensive hydrogen bonds with Asn-73 sugar, and bridges the two fibronectin domains transforming the V-shaped receptor into an A-frame. As to expression, selectively expressed in lymphoid tissues. Most highly expressed in thymus and spleen.

It is found in the membrane. This is a receptor for interleukin-21. The polypeptide is Interleukin-21 receptor (IL21R) (Homo sapiens (Human)).